Reading from the N-terminus, the 158-residue chain is MSSRHFKIKNSLFWWVAGLALASDRLTKAWIVATYALTVPPQTTPIIPGVFHITYVTNTGAAFSLFANGSIWLRWLSLIVSLGLITWAILGPRLDRWQQVGYGCLLGGALGNGIDRFLTGEVVDFLDFRWIQFPVFNVADIAINIGIVCLLWSAWHPR.

3 consecutive transmembrane segments (helical) span residues 12 to 32 (LFWW…AWIV), 46 to 66 (IIPG…FSLF), and 71 to 91 (IWLR…AILG). Active-site residues include Asp-124 and Asp-140. Residues 135–155 (VFNVADIAINIGIVCLLWSAW) form a helical membrane-spanning segment.

This sequence belongs to the peptidase A8 family.

The protein resides in the cell inner membrane. It catalyses the reaction Release of signal peptides from bacterial membrane prolipoproteins. Hydrolyzes -Xaa-Yaa-Zaa-|-(S,diacylglyceryl)Cys-, in which Xaa is hydrophobic (preferably Leu), and Yaa (Ala or Ser) and Zaa (Gly or Ala) have small, neutral side chains.. Its pathway is protein modification; lipoprotein biosynthesis (signal peptide cleavage). In terms of biological role, this protein specifically catalyzes the removal of signal peptides from prolipoproteins. The polypeptide is Lipoprotein signal peptidase (Thermosynechococcus vestitus (strain NIES-2133 / IAM M-273 / BP-1)).